Here is an 879-residue protein sequence, read N- to C-terminus: MTQEYSTLRNNISMLGRFLGETINDAQGEDILELIENIRKLSRNSRAGDDKARQALLDTLGSISNENIIPVARAFSQFLNLTNIAEQYQTISREHSLAQSSSQSLSELFKRLKEQNASVEEVHKTVEKLLIELVLTAHPTETTRRSLIHKHIEINKCLSKLEHHDLTEKERNIIERLLLRLIAEAWHTNEIRTVRPTPFDEAKWGFAMLENSLWQAVPEFLRQLNETAREFLGYDLPVGLKPVRISSWMGGDRDGNPFVTAQITKKVLYFARWKAADLFLQDISKLADELSMMKCSDEFRDKYGEHLEPYRFVVKNLRNQLTATLAYFDDHLSNRTPRVSESEIILEDNQLWEPLYDCYQSLIQYGMRIIANGSLLNILHRISCFGVTLSQMDIRQESTRHTDAIAEITRYIGLGDYAQWTEDDKQAFLIRELSSRRPLIPQNWTPSPETQEILDTCKVIAQQKQGVIACYVISMARNASDVLAVHLLLKEAGVPYHIPVVPLFETLEDLDAAEKVMTQLFNVGWYRGVINNRQMVMIGYSDSAKDAGMMAASWAQYRAQEALVNLTEKLGIELTLFHGRGGTIGRGGAPAHAALLSQPPRSLKNGLRVTEQGEMIRFKLGLPTVAVETFDLYASAILEANLLPPPEPKPEWRNIMDELSTISCDIYRGVVRGDKDFVPYFRSATPEQELSKLPLGSRPAKRNPNGGVESLRAIPWIFAWMQNRLMLPAWLGAGASIRQIIEQGKGDIIHKMCENWPFFSTRIGMLEMVFSKSDTWLSQQYDQRLVKKELWYLGENLRKQLEDDIQTVLSLSHQSELMSDLPWIADSIALRNIYTDPLNLLQVELLHRFRENPEQVNPDVEQALMITITGIAAGMRNTG.

Active-site residues include H138 and K545.

This sequence belongs to the PEPCase type 1 family. Requires Mg(2+) as cofactor.

It catalyses the reaction oxaloacetate + phosphate = phosphoenolpyruvate + hydrogencarbonate. Its function is as follows. Forms oxaloacetate, a four-carbon dicarboxylic acid source for the tricarboxylic acid cycle. The polypeptide is Phosphoenolpyruvate carboxylase (Haemophilus influenzae (strain PittEE)).